Here is a 241-residue protein sequence, read N- to C-terminus: VKSTNLMAFVATKMLERQEDLDTCTEMQVEKMKTSTKARLKTESSFAPRTWEDAIKDGELLFNGTILQAESPTMTPASVEMKGKKLPIDFAPSNIAPIGQNPIYLSPCIPNFDGNVWEATMYHHRGATLTKTMNCNCFQRTIWCHPNPSRMRLSYAFVLYCRNTKKICGYLIARQVAGIETGIRKCFRCIKSGFVMATDEISLTILQSIKSGAQLDPYWGNETPDIDKTEAYMLSLREAGP.

The protein resides in the host cytoplasm. It is found in the host nucleus. Functionally, suppresses the RNA silencing-based antiviral response in Drosophila cells. The protein is Non-structural protein 1 (NS) of Influenza C virus (strain C/Mississippi/1980).